A 399-amino-acid polypeptide reads, in one-letter code: Homoserine O-acetyltransferase (399 aa).

The AB hydrolase-1 domain occupies 63–372; the sequence is NAILVCHALT…TDRGHDAFLL (310 aa). The active-site Nucleophile is Ser168. Substrate is bound at residue Arg238. Active-site residues include Asp334 and His367. Asp368 serves as a coordination point for substrate.

The protein belongs to the AB hydrolase superfamily. MetX family. In terms of assembly, homodimer.

It is found in the cytoplasm. It carries out the reaction L-homoserine + acetyl-CoA = O-acetyl-L-homoserine + CoA. The protein operates within amino-acid biosynthesis; L-methionine biosynthesis via de novo pathway; O-acetyl-L-homoserine from L-homoserine: step 1/1. Functionally, transfers an acetyl group from acetyl-CoA to L-homoserine, forming acetyl-L-homoserine. This chain is Homoserine O-acetyltransferase, found in Nitrobacter hamburgensis (strain DSM 10229 / NCIMB 13809 / X14).